Reading from the N-terminus, the 573-residue chain is Urease subunit alpha 2 (573 aa).

Residues 135 to 573 (GGMDTHVHYI…ISLNQLYFFS (439 aa)) enclose the Urease domain. 3 residues coordinate Ni(2+): His-140, His-142, and Lys-223. The residue at position 223 (Lys-223) is an N6-carboxylysine. His-225 serves as a coordination point for substrate. Residues His-252 and His-278 each contribute to the Ni(2+) site. His-326 acts as the Proton donor in catalysis. Ni(2+) is bound at residue Asp-366.

This sequence belongs to the metallo-dependent hydrolases superfamily. Urease alpha subunit family. As to quaternary structure, heterotrimer of UreA (gamma), UreB (beta) and UreC (alpha) subunits. Three heterotrimers associate to form the active enzyme. It depends on Ni cation as a cofactor. Post-translationally, carboxylation allows a single lysine to coordinate two nickel ions.

The protein resides in the cytoplasm. The enzyme catalyses urea + 2 H2O + H(+) = hydrogencarbonate + 2 NH4(+). It participates in nitrogen metabolism; urea degradation; CO(2) and NH(3) from urea (urease route): step 1/1. Functionally, disrupting the ure2 operon has no effect on urease activity, or pathogen survival in BALB/c mice when inoculated by gavage, but confers slightly enhanced resistance to low pH killing in vitro. The chain is Urease subunit alpha 2 from Brucella suis biovar 1 (strain 1330).